Consider the following 542-residue polypeptide: Protein lin-9 homolog (542 aa).

Residue A2 is modified to N-acetylalanine. The sufficient for interaction with RB1 stretch occupies residues 2-296 (AELDQLPDES…QKQRPSRFFM (295 aa)). K21 is covalently cross-linked (Glycyl lysine isopeptide (Lys-Gly) (interchain with G-Cter in SUMO2)). Phosphoserine is present on residues S65 and S95. A phosphothreonine mark is found at T96 and T304. Residues S309 and S321 each carry the phosphoserine modification. Positions 354 to 413 (MIKKEHIKKLREMNTEAEKLKSYSMPISIEFQRRYATIVLELEQLNKDLNKVLHKVQQYC) form a coiled coil.

Belongs to the lin-9 family. As to quaternary structure, component of the DREAM complex (also named LINC complex) at least composed of E2F4, E2F5, LIN9, LIN37, LIN52, LIN54, MYBL1, MYBL2, RBL1, RBL2, RBBP4, TFDP1 and TFDP2. The complex exists in quiescent cells where it represses cell cycle-dependent genes. It dissociates in S phase when LIN9, LIN37, LIN52 and LIN54 form a subcomplex that binds to MYBL2. Interacts with RB1. Expressed in thymus and testis.

Its subcellular location is the nucleus. It localises to the nucleoplasm. Functionally, acts as a tumor suppressor. Inhibits DNA synthesis. Its ability to inhibit oncogenic transformation is mediated through its association with RB1. Plays a role in the expression of genes required for the G1/S transition. The polypeptide is Protein lin-9 homolog (LIN9) (Homo sapiens (Human)).